The chain runs to 204 residues: Rho GDP-dissociation inhibitor 1 (204 aa).

Residues 1–36 (MAEQEPTAEQLAQIAAENEEDEHSVNYKPPAQKSIQ) form a disordered region. Residue Ala2 is modified to N-acetylalanine. Ser34 carries the post-translational modification Phosphoserine. Lys43 carries the post-translational modification N6-acetyllysine. Ser47 bears the Phosphoserine mark. N6-acetyllysine occurs at positions 105 and 127. Glycyl lysine isopeptide (Lys-Gly) (interchain with G-Cter in SUMO1); alternate cross-links involve residues Lys138 and Lys141. Residues Lys138 and Lys141 each participate in a glycyl lysine isopeptide (Lys-Gly) (interchain with G-Cter in SUMO2); alternate cross-link. Position 141 is an N6-acetyllysine; alternate (Lys141). Position 141 is an N6-succinyllysine; alternate (Lys141). Position 178 is an N6-acetyllysine (Lys178).

It belongs to the Rho GDI family. Monomer. Interacts with FER. Interacts with PLXNB3. Forms a heterodimer with RAC1. Interacts with RHOA, the affinity is increased by three orders of magnitude when RHOA is prenylated. Interacts with PSMD10; the interaction increases ARHGDIA association with RHOA, leading to ARHGDIA-mediated inactivation of RHOA and ROCK and prolonged AKT activation. Interacts with KANK2; the interaction is direct and may regulate the interaction of ARHGDIA with RHOA, RAC1 and CDC42. Interacts with RHOC. Interacts with CDC42. Interacts with NGFR (via death domain); NGFR binding decreases the affinity for RHOA.

The protein resides in the cytoplasm. In terms of biological role, controls Rho proteins homeostasis. Regulates the GDP/GTP exchange reaction of the Rho proteins by inhibiting the dissociation of GDP from them, and the subsequent binding of GTP to them. Retains Rho proteins such as CDC42, RAC1 and RHOA in an inactive cytosolic pool, regulating their stability and protecting them from degradation. Actively involved in the recycling and distribution of activated Rho GTPases in the cell, mediates extraction from membranes of both inactive and activated molecules due its exceptionally high affinity for prenylated forms. Through the modulation of Rho proteins, may play a role in cell motility regulation. In glioma cells, inhibits cell migration and invasion by mediating the signals of SEMA5A and PLXNB3 that lead to inactivation of RAC1. The sequence is that of Rho GDP-dissociation inhibitor 1 (ARHGDIA) from Homo sapiens (Human).